Reading from the N-terminus, the 78-residue chain is AELKSCFPVGHECDDDASNCNCCGDDVYCACGWGRWNCKCKVADQSYAYGICKDKVNCPNRHLWPAKECKMPCRRNCG.

7 cysteine pairs are disulfide-bonded: Cys-6/Cys-23, Cys-13/Cys-29, Cys-20/Cys-52, Cys-22/Cys-40, Cys-31/Cys-38, Cys-58/Cys-73, and Cys-69/Cys-77.

As to expression, expressed by the venom gland.

It localises to the secreted. Its function is as follows. Lethal neurotoxin. Causes spastic paralysis and death in mice in 4-6 minutes after intracerebroventricular injection at dose levels of 1.5 ug per mouse. This is U5-ctenitoxin-Pk1a from Phoneutria keyserlingi (Brazilian wandering spider).